Reading from the N-terminus, the 83-residue chain is MNTQRKSKHLKTNPTIVASSSEEVSSLEWEEIAMAQEEEDLICRMYKLVGERWDLIAGRIPGRTAEEIERFWVMKNHRRSQLR.

In terms of domain architecture, Myb-like spans 35–72 (AQEEEDLICRMYKLVGERWDLIAGRIPGRTAEEIERFW).

In terms of tissue distribution, expressed in developing trichomes and non-root hair cells.

The protein localises to the nucleus. MYB-type transcription factor involved in epidermal cell fate specification. Acts as a negative regulator of trichome development, by mediating lateral inhibition. Promotes the formation of hair developing cells in H position in root epidermis, probably by inhibiting non-hair cell formation. The chain is MYB-like transcription factor ETC1 (ETC1) from Arabidopsis thaliana (Mouse-ear cress).